Reading from the N-terminus, the 320-residue chain is Dual oxidase maturation factor 2 (320 aa).

The Extracellular segment spans residues 1–21 (MTLWNGVLPFYPQPRHAAGFS). The helical transmembrane segment at 22 to 42 (VPLLIVILVFLALAASFLLIL) threads the bilayer. Topologically, residues 43-56 (PGIRGHSRWFWLVR) are cytoplasmic. Residues 57 to 77 (VLLSLFIGAEIVAVHFSAEWF) traverse the membrane as a helical segment. The Extracellular portion of the chain corresponds to 78–183 (VGTVNTNTSY…HLAGHYASAT (106 aa)). N-linked (GlcNAc...) asparagine glycans are attached at residues asparagine 84, asparagine 109, and asparagine 121. A helical transmembrane segment spans residues 184–204 (LWVAFCFWLLSNVLLSTPAPL). Over 205-206 (YG) the chain is Cytoplasmic. Residues 207-227 (GLALLTTGAFALFGVFALASI) form a helical membrane-spanning segment. At 228–247 (SSVPLCPLRLGSSALTTQYG) the chain is on the extracellular side. Residues 248–268 (AAFWVTLATGVLCLFLGGAVV) form a helical membrane-spanning segment. Topologically, residues 269 to 320 (SLQYVRPSALRTLLDQSAKDCSQERGGSPLILGDPLHKQAALPDLKCITTNL) are cytoplasmic.

Belongs to the DUOXA family. As to quaternary structure, heterodimer with DUXA2; disulfide-linked. Interacts with CSNK1G2. In terms of processing, N-glycosylated. In terms of tissue distribution, specifically expressed in thyroid. Also detected in salivary glands.

The protein resides in the endoplasmic reticulum membrane. Functionally, required for the maturation and the transport from the endoplasmic reticulum to the plasma membrane of functional DUOX2. May play a role in thyroid hormone synthesis. In Homo sapiens (Human), this protein is Dual oxidase maturation factor 2 (DUOXA2).